The following is a 352-amino-acid chain: Alpha-2-HS-glycoprotein (352 aa).

Positions 1–18 (MKSLVLLLCFAQLWSCQS) are cleaved as a signal peptide. Residues 19–133 (APQGAGLGFR…QFRVLHAQCH (115 aa)) form the Cystatin fetuin-A-type 1 domain. 6 cysteine pairs are disulfide-bonded: Cys-32-Cys-343, Cys-89-Cys-100, Cys-114-Cys-132, Cys-146-Cys-149, Cys-208-Cys-219, and Cys-230-Cys-247. Asn-99 is a glycosylation site (N-linked (GlcNAc...) asparagine). At Ser-134 the chain carries Phosphoserine. Thr-135 carries the phosphothreonine modification. Ser-138 carries the phosphoserine modification. The Cystatin fetuin-A-type 2 domain maps to 144-250 (KFCPRCPILI…EEVSVACKLF (107 aa)). Residues Asn-156 and Asn-176 are each glycosylated (N-linked (GlcNAc...) asparagine). Positions 256-273 (PANANPAGPAPTVGQAAP) are enriched in low complexity. Residues 256–280 (PANANPAGPAPTVGQAAPVAPPAGP) form a disordered region. Phosphoserine occurs at positions 309, 313, 316, and 318. Residues 319-338 (GEVLHSPKVGQPGDAGAAGP) are disordered. Over residues 328–338 (GQPGDAGAAGP) the composition is skewed to low complexity.

Belongs to the fetuin family. In terms of processing, undergoes complex post-translational modification involving N-glycosylation, and addition of fucose and sialic acid residues. Phosphorylation occurs at a serine residue. Phosphorylated by FAM20C in the extracellular medium. Synthesized in liver and secreted by the hepatocytes in the blood.

Its subcellular location is the secreted. Its function is as follows. Could inhibit both insulin-receptor tyrosine kinase activity and insulin-stimulated receptor autophosphorylation and, concomitantly, antagonize the mitogenic effect of the hormone in cultured rat hepatoma cells. The chain is Alpha-2-HS-glycoprotein (Ahsg) from Rattus norvegicus (Rat).